Reading from the N-terminus, the 121-residue chain is Flagellar protein FliT (121 aa).

The interval 1 to 50 is required for homodimerization; it reads MNNAPHLYFAWQQLVEKSQLMLRLATEEQWDELIASEMAYVNAVQEIAHL. Residues 60-98 are fliD binding; the sequence is MQEQLRPMLLLILDNESKVKQLLQIRMDELAKLVGQSSV.

Belongs to the FliT family. Homodimer. Interacts with FliD and FlhC.

It is found in the cytoplasm. The protein resides in the cytosol. Dual-function protein that regulates the transcription of class 2 flagellar operons and that also acts as an export chaperone for the filament-capping protein FliD. As a transcriptional regulator, acts as an anti-FlhDC factor; it directly binds FlhC, thus inhibiting the binding of the FlhC/FlhD complex to class 2 promoters, resulting in decreased expression of class 2 flagellar operons. As a chaperone, effects FliD transition to the membrane by preventing its premature polymerization, and by directing it to the export apparatus. This chain is Flagellar protein FliT, found in Escherichia coli O6:K15:H31 (strain 536 / UPEC).